The primary structure comprises 388 residues: S-adenosylmethionine synthase (388 aa).

Position 16 (His-16) interacts with ATP. Asp-18 is a Mg(2+) binding site. Glu-44 is a binding site for K(+). L-methionine is bound by residues Glu-57 and Gln-100. Residues Gln-100–Arg-110 are flexible loop. ATP contacts are provided by residues Asp-165–Lys-167, Lys-231–Phe-232, Asp-240, Arg-246–Lys-247, Ala-263, and Lys-267. Asp-240 is a binding site for L-methionine. Position 271 (Lys-271) interacts with L-methionine.

It belongs to the AdoMet synthase family. As to quaternary structure, homotetramer; dimer of dimers. It depends on Mg(2+) as a cofactor. Requires K(+) as cofactor.

The protein resides in the cytoplasm. The enzyme catalyses L-methionine + ATP + H2O = S-adenosyl-L-methionine + phosphate + diphosphate. Its pathway is amino-acid biosynthesis; S-adenosyl-L-methionine biosynthesis; S-adenosyl-L-methionine from L-methionine: step 1/1. Its function is as follows. Catalyzes the formation of S-adenosylmethionine (AdoMet) from methionine and ATP. The overall synthetic reaction is composed of two sequential steps, AdoMet formation and the subsequent tripolyphosphate hydrolysis which occurs prior to release of AdoMet from the enzyme. This chain is S-adenosylmethionine synthase, found in Psychrobacter sp. (strain PRwf-1).